The following is a 505-amino-acid chain: Kinesin light chain 3 (505 aa).

The disordered stretch occupies residues 1–20 (MSVQVAAPGSTGLGPERLNP). A coiled-coil region spans residues 90–150 (ALSAHVGVLE…EEEKSHLQFL (61 aa)). Positions 154-197 (RQYDPPEESQRPDSPPRRDSLASLFPSEEEEKKGPEAAGAAAAQ) are disordered. Basic and acidic residues predominate over residues 161–173 (ESQRPDSPPRRDS). Ser-173 is subject to Phosphoserine. 5 TPR repeats span residues 207–240 (LRTL…LERS), 249–282 (ATML…REQT), 291–324 (AATL…REKV), 333–366 (AKQL…YEAL), and 375–408 (AKTK…EALP). The interval 409-439 (APLGAPQGGTAGEAQQQVLRRSSSFSKLRES) is disordered. Residues 421-434 (EAQQQVLRRSSSFS) show a composition bias toward polar residues. Ser-467 bears the Phosphoserine mark. Positions 486–505 (QHLNEASRTLSASTQDLSPR) are disordered. Thr-499 carries the post-translational modification Phosphothreonine. Phosphoserine is present on Ser-503.

The protein belongs to the kinesin light chain family. Oligomer composed of two heavy chains and two light chains. Associates with microtubulin in an ATP-dependent manner. Interacts with KIF5C. Interacts with ODF1. Interacts with LRGUK. Interacts with VDAC2. Expressed in postmeiotic male germ cells (at protein level).

The protein resides in the cytoplasm. The protein localises to the cytoskeleton. It localises to the mitochondrion. Functionally, kinesin is a microtubule-associated force-producing protein that may play a role in organelle transport. Plays a role during spermiogenesis in the development of the sperm tail midpiece and in the normal function of spermatozoa. May play a role in the formation of the mitochondrial sheath formation in the developing spermatid midpiece. The chain is Kinesin light chain 3 (Klc3) from Rattus norvegicus (Rat).